Reading from the N-terminus, the 253-residue chain is Complement C1q subcomponent subunit B (253 aa).

Residues 1–27 form the signal peptide; that stretch reads MMMKIPWGSIPVLMLLLLLGLIDISQA. Gln28 is modified (pyrrolidone carboxylic acid). Pro35, Pro38, Pro41, Pro53, and Pro56 each carry 4-hydroxyproline. Collagen-like domains lie at 37-86 and 60-114; these read IPGI…PGNP and GEKG…GESG. The segment at 38–115 is disordered; it reads PGIPGIPGTP…APGPKGESGD (78 aa). 2 positions are modified to 5-hydroxylysine: Lys59 and Lys62. 4-hydroxyproline is present on Pro65. The span at 70 to 79 shows a compositional bias: basic and acidic residues; it reads DHGEFGEKGD. Lys77 carries the 5-hydroxylysine modification. A compositionally biased stretch (low complexity) spans 80–92; the sequence is PGIPGNPGKVGPK. A 4-hydroxyproline mark is found at Pro83 and Pro86. 2 positions are modified to 5-hydroxylysine: Lys92 and Lys98. The segment covering 96–105 has biased composition (gly residues); that stretch reads GPKGGPGAPG. 3 positions are modified to 4-hydroxyproline: Pro101, Pro104, and Pro107. Lys110 bears the 5-hydroxylysine mark. The region spanning 117–253 is the C1q domain; that stretch reads KATQKIAFSA…GFLLFPDMEA (137 aa). Cys181 and Cys198 form a disulfide bridge. Positions 199, 200, and 206 each coordinate Ca(2+).

As to quaternary structure, core component of the complement C1 complex, a calcium-dependent complex composed of 1 molecule of the C1Q subcomplex, 2 molecules of C1R and 2 molecules of C1S. The C1Q subcomplex is composed 18 subunits: 3 chains of C1QA, C1QB, and C1QC trimerize to form 6 collagen-like triple helices connected to six globular ligand-recognition modules (C1q domain). In terms of processing, hydroxylated on lysine and proline residues. Hydroxylated lysine residues can be glycosylated. Human C1Q contains up to 68.3 hydroxylysine-galactosylglucose residues and up to 2.5 hydroxylysine-galactose per molecule. Total percentage hydroxylysine residues glycosylated is 86.4%.

It localises to the secreted. The protein resides in the cell surface. With respect to regulation, the C1Q subcomplex is inhibited by sulfated molecules, such as triterpenoid sulfates, heparan sulfate, or chondroitin sulfates. Core component of the complement C1 complex, a multiprotein complex that initiates the classical pathway of the complement system, a cascade of proteins that leads to phagocytosis and breakdown of pathogens and signaling that strengthens the adaptive immune system. The classical complement pathway is initiated by the C1Q subcomplex of the C1 complex, which specifically binds IgG or IgM immunoglobulins complexed with antigens, forming antigen-antibody complexes on the surface of pathogens: C1QA, together with C1QB and C1QC, specifically recognizes and binds the Fc regions of IgG or IgM via its C1q domain. Immunoglobulin-binding activates the proenzyme C1R, which cleaves C1S, initiating the proteolytic cascade of the complement system. The C1Q subcomplex is activated by a hexamer of IgG complexed with antigens, while it is activated by a pentameric IgM. The C1Q subcomplex also recognizes and binds phosphatidylserine exposed on the surface of cells undergoing programmed cell death, possibly promoting activation of the complement system. This is Complement C1q subcomponent subunit B from Homo sapiens (Human).